Here is a 744-residue protein sequence, read N- to C-terminus: Adenosylcobalamin-dependent ribonucleoside-triphosphate reductase (744 aa).

The cysteines at positions 120 and 424 are disulfide-linked. The interval 148–159 is effector region-1; the sequence is SMPFSFLFDQLM. An effector region-2 region spans residues 169–318; the sequence is VDDNINQIPQ…ICNLIGKTVV (150 aa). Catalysis depends on residues Cys413 and Glu415. Residues 570 to 631 form an adenosylcobalamin-binding-1 region; sequence FHYAGYLIQR…SKNFASAGTV (62 aa). The segment at 690–729 is adenosylcobalamin-binding-2; it reads LKQAPKEPINKKAYEDRVAMITGDVKEVFENQNKDQKGLE.

Belongs to the class II ribonucleoside-triphosphate reductase family. Monomer. It depends on adenosylcob(III)alamin as a cofactor.

It carries out the reaction a 2'-deoxyribonucleoside 5'-triphosphate + [thioredoxin]-disulfide + H2O = a ribonucleoside 5'-triphosphate + [thioredoxin]-dithiol. With respect to regulation, allosterically regulated by ATP and dNTP. In Lactobacillus helveticus (strain DPC 4571), this protein is Adenosylcobalamin-dependent ribonucleoside-triphosphate reductase (rtpR).